The primary structure comprises 137 residues: uncharacterized protein (137 aa).

The 76-residue stretch at 30-105 (SLLCVFTALR…IRFIQIPDKI (76 aa)) folds into the Sm domain.

This is an uncharacterized protein from Dictyostelium discoideum (Social amoeba).